An 85-amino-acid chain; its full sequence is MKVTLIAILTCAAVLVLHTTAAEELEAESQLMEVGMPDTELAAVDEERLFECSVSCEIEKEGNKDCKKKKCRGGRKCKFNMCVKV.

The N-terminal stretch at 1-22 is a signal peptide; the sequence is MKVTLIAILTCAAVLVLHTTAA. A propeptide spanning residues 23–48 is cleaved from the precursor; the sequence is EELEAESQLMEVGMPDTELAAVDEER. Intrachain disulfides connect C52–C66, C56–C77, and C71–C82.

Belongs to the neurotoxin 12 (Hwtx-2) family. 02 (Hwtx-2) subfamily. In terms of tissue distribution, expressed by the venom gland.

It is found in the secreted. In terms of biological role, postsynaptic neurotoxin. This chain is U4-theraphotoxin-Hhn1q, found in Cyriopagopus hainanus (Chinese bird spider).